The following is a 476-amino-acid chain: Bifunctional protein HldE (476 aa).

The tract at residues 1-319 (MKVSLPAFEK…EALALHHGES (319 aa)) is ribokinase. 195 to 198 (NMSE) is an ATP binding site. Aspartate 264 is a catalytic residue. Residues 345 to 476 (MTNGCFDILH…AIIQNIMANQ (132 aa)) form a cytidylyltransferase region.

It in the N-terminal section; belongs to the carbohydrate kinase PfkB family. In the C-terminal section; belongs to the cytidylyltransferase family. In terms of assembly, homodimer.

It catalyses the reaction D-glycero-beta-D-manno-heptose 7-phosphate + ATP = D-glycero-beta-D-manno-heptose 1,7-bisphosphate + ADP + H(+). The enzyme catalyses D-glycero-beta-D-manno-heptose 1-phosphate + ATP + H(+) = ADP-D-glycero-beta-D-manno-heptose + diphosphate. Its pathway is nucleotide-sugar biosynthesis; ADP-L-glycero-beta-D-manno-heptose biosynthesis; ADP-L-glycero-beta-D-manno-heptose from D-glycero-beta-D-manno-heptose 7-phosphate: step 1/4. It functions in the pathway nucleotide-sugar biosynthesis; ADP-L-glycero-beta-D-manno-heptose biosynthesis; ADP-L-glycero-beta-D-manno-heptose from D-glycero-beta-D-manno-heptose 7-phosphate: step 3/4. Its function is as follows. Catalyzes the phosphorylation of D-glycero-D-manno-heptose 7-phosphate at the C-1 position to selectively form D-glycero-beta-D-manno-heptose-1,7-bisphosphate. Functionally, catalyzes the ADP transfer from ATP to D-glycero-beta-D-manno-heptose 1-phosphate, yielding ADP-D-glycero-beta-D-manno-heptose. This Shewanella baltica (strain OS195) protein is Bifunctional protein HldE.